Reading from the N-terminus, the 160-residue chain is Cytochrome b6-f complex subunit 4 (160 aa).

The next 3 helical transmembrane spans lie at 36-56 (LLYI…GLAV), 95-115 (LLGV…PFLE), and 131-151 (TVFL…TLPI).

This sequence belongs to the cytochrome b family. PetD subfamily. As to quaternary structure, the 4 large subunits of the cytochrome b6-f complex are cytochrome b6, subunit IV (17 kDa polypeptide, petD), cytochrome f and the Rieske protein, while the 4 small subunits are petG, petL, petM and petN. The complex functions as a dimer.

The protein resides in the plastid. It localises to the chloroplast thylakoid membrane. Component of the cytochrome b6-f complex, which mediates electron transfer between photosystem II (PSII) and photosystem I (PSI), cyclic electron flow around PSI, and state transitions. This chain is Cytochrome b6-f complex subunit 4, found in Coffea arabica (Arabian coffee).